The sequence spans 665 residues: Fructose-1,6-bisphosphatase class 3 (665 aa).

This sequence belongs to the FBPase class 3 family. It depends on Mn(2+) as a cofactor.

The catalysed reaction is beta-D-fructose 1,6-bisphosphate + H2O = beta-D-fructose 6-phosphate + phosphate. It participates in carbohydrate biosynthesis; gluconeogenesis. This Alkaliphilus metalliredigens (strain QYMF) protein is Fructose-1,6-bisphosphatase class 3.